Reading from the N-terminus, the 154-residue chain is Transcriptional repressor NrdR (154 aa).

A zinc finger spans residues 3–34; it reads CPFCGANDTKVIDSRLVAEGEQVRRRRECVAC. Positions 49 to 139 constitute an ATP-cone domain; the sequence is PRLIKQDGTR…VYRRFQDLDE (91 aa).

It belongs to the NrdR family. Requires Zn(2+) as cofactor.

In terms of biological role, negatively regulates transcription of bacterial ribonucleotide reductase nrd genes and operons by binding to NrdR-boxes. This Pseudomonas putida (strain GB-1) protein is Transcriptional repressor NrdR.